A 393-amino-acid polypeptide reads, in one-letter code: Telomeric repeat-binding factor 2-interacting protein 1 (393 aa).

An N-acetylalanine modification is found at Ala-2. One can recognise a BRCT domain in the interval Asp-10–Leu-101. Phosphoserine is present on residues Ser-36 and Ser-43. The tract at residues Thr-104–Ala-132 is disordered. Lys-111 is covalently cross-linked (Glycyl lysine isopeptide (Lys-Gly) (interchain with G-Cter in SUMO2)). The 61-residue stretch at Gln-125–Leu-185 folds into the Myb-like domain. Phosphoserine is present on residues Ser-151 and Ser-153. Lys-191 participates in a covalent cross-link: Glycyl lysine isopeptide (Lys-Gly) (interchain with G-Cter in SUMO2). Disordered stretches follow at residues Leu-194 to Asn-248 and His-272 to Val-305. Ser-200 and Ser-203 each carry phosphoserine. Glycyl lysine isopeptide (Lys-Gly) (interchain with G-Cter in SUMO2) cross-links involve residues Lys-205, Lys-209, and Lys-237. Over residues Gln-223–Asn-248 the composition is skewed to basic and acidic residues. Acidic residues predominate over residues Thr-282–Glu-297. Lys-366 participates in a covalent cross-link: Glycyl lysine isopeptide (Lys-Gly) (interchain with G-Cter in SUMO2). Positions Lys-377 to Lys-393 match the Nuclear localization signal motif.

Belongs to the RAP1 family. As to quaternary structure, associates with the I-kappa-B-kinase (IKK) core complex, composed of CHUK, IKBKB and IKBKG. Homodimer. Component of the shelterin complex (telosome) composed of TERF1, TERF2, TINF2, TERF2IP ACD and POT1. Interacts with TERF2 (but not TERF1) with its C-terminus. Interacts with SLX4/BTBD12. Interacts with TERF2; the interaction is direct.

The protein resides in the nucleus. Its subcellular location is the cytoplasm. The protein localises to the chromosome. It is found in the telomere. Functionally, acts both as a regulator of telomere function and as a transcription regulator. Involved in the regulation of telomere length and protection as a component of the shelterin complex (telosome). In contrast to other components of the shelterin complex, it is dispensible for telomere capping and does not participate in the protection of telomeres against non-homologous end-joining (NHEJ)-mediated repair. Instead, it is required to negatively regulate telomere recombination and is essential for repressing homology-directed repair (HDR), which can affect telomere length. Does not bind DNA directly: recruited to telomeric double-stranded 5'-TTAGGG-3' repeats via its interaction with TERF2. Independently of its function in telomeres, also acts as a transcription regulator: recruited to extratelomeric 5'-TTAGGG-3' sites via its association with TERF2 or other factors, and regulates gene expression. When cytoplasmic, associates with the I-kappa-B-kinase (IKK) complex and acts as a regulator of the NF-kappa-B signaling by promoting IKK-mediated phosphorylation of RELA/p65, leading to activate expression of NF-kappa-B target genes. This is Telomeric repeat-binding factor 2-interacting protein 1 (Terf2ip) from Rattus norvegicus (Rat).